Here is a 211-residue protein sequence, read N- to C-terminus: SAGA-associated factor 11 homolog 2 (211 aa).

An SGF11-type zinc finger spans residues 115–136 (CTCPNCDRLVAAARFAPHLEKC). Residues 149-211 (RRLATKEGSS…GSKKNNGKTF (63 aa)) are disordered. The segment covering 157–166 (SSASTSSTST) has biased composition (low complexity). S187 carries the phosphoserine modification. Positions 197-211 (SSRNNGSKKNNGKTF) are enriched in low complexity.

This sequence belongs to the SGF11 family. Component of some SAGA transcription coactivator-HAT complexes, at least composed of Ada2b, not/nonstop, Pcaf/Gcn5, Sgf11 and Spt3. Within the SAGA complex, Sgf11, e(y)2, and not/nonstop form an additional subcomplex of SAGA called the DUB module (deubiquitination module). Interacts directly with not/nonstop. Interacts with the AMEX complex component xmas-2. Interacts with Cbp80; important for promoter recruitment of Sgf11 that is not associated with the DUB module.

It is found in the nucleus. The protein localises to the nucleoplasm. It localises to the cytoplasm. In terms of biological role, component of the transcription regulatory histone acetylation (HAT) complex SAGA, a multiprotein complex that activates transcription by remodeling chromatin and mediating histone acetylation and deubiquitination. Within the SAGA complex, participates in a subcomplex that specifically deubiquitinates histone H2B. The SAGA complex is recruited to specific gene promoters by activators, where it is required for transcription. Required for nuclear receptor-mediated transactivation. Binds independently on SAGA to promoters in an RNA-dependent manner. Binds to mRNA and is essential for total mRNA export from the nucleus. Required to counteract heterochromatin silencing. Controls the development of neuronal connectivity in visual system by being required for accurate axon targeting in the optic lobe. Required for expression of ecdysone-induced genes such as br/broad. The protein is SAGA-associated factor 11 homolog 2 of Drosophila grimshawi (Hawaiian fruit fly).